Here is a 267-residue protein sequence, read N- to C-terminus: 5'-nucleotidase SurE (267 aa).

A divalent metal cation-binding residues include Asp-9, Asp-10, Ser-40, and Asn-97.

The protein belongs to the SurE nucleotidase family. The cofactor is a divalent metal cation.

It localises to the cytoplasm. It catalyses the reaction a ribonucleoside 5'-phosphate + H2O = a ribonucleoside + phosphate. Functionally, nucleotidase that shows phosphatase activity on nucleoside 5'-monophosphates. This Helicobacter pylori (strain HPAG1) protein is 5'-nucleotidase SurE.